Here is a 370-residue protein sequence, read N- to C-terminus: Protein STRICTOSIDINE SYNTHASE-LIKE 9 (370 aa).

A signal peptide spans 1–26 (MPINQKIPTWFAVPAVFAVLSVISYQ). N-linked (GlcNAc...) asparagine glycosylation is found at Asn-97 and Asn-171.

It belongs to the strictosidine synthase family.

The protein resides in the vacuole. The polypeptide is Protein STRICTOSIDINE SYNTHASE-LIKE 9 (Arabidopsis thaliana (Mouse-ear cress)).